The sequence spans 266 residues: Putative carbamate hydrolase RutD (266 aa).

The 102-residue stretch at 14-115 (PVVVLISGLG…TMLVSVNGWL (102 aa)) folds into the AB hydrolase-1 domain.

The protein belongs to the AB hydrolase superfamily. Hydrolase RutD family.

It catalyses the reaction carbamate + 2 H(+) = NH4(+) + CO2. Involved in pyrimidine catabolism. May facilitate the hydrolysis of carbamate, a reaction that can also occur spontaneously. This Shigella flexneri serotype X (strain 2002017) protein is Putative carbamate hydrolase RutD.